The chain runs to 229 residues: 2-C-methyl-D-erythritol 4-phosphate cytidylyltransferase (229 aa).

The protein belongs to the IspD/TarI cytidylyltransferase family. IspD subfamily.

It catalyses the reaction 2-C-methyl-D-erythritol 4-phosphate + CTP + H(+) = 4-CDP-2-C-methyl-D-erythritol + diphosphate. It functions in the pathway isoprenoid biosynthesis; isopentenyl diphosphate biosynthesis via DXP pathway; isopentenyl diphosphate from 1-deoxy-D-xylulose 5-phosphate: step 2/6. Functionally, catalyzes the formation of 4-diphosphocytidyl-2-C-methyl-D-erythritol from CTP and 2-C-methyl-D-erythritol 4-phosphate (MEP). The polypeptide is 2-C-methyl-D-erythritol 4-phosphate cytidylyltransferase (Neisseria meningitidis serogroup C / serotype 2a (strain ATCC 700532 / DSM 15464 / FAM18)).